A 277-amino-acid polypeptide reads, in one-letter code: Large ribosomal subunit protein uL2c (277 aa).

Positions arginine 30–arginine 60 are disordered. The segment covering serine 51–arginine 60 has biased composition (basic residues).

This sequence belongs to the universal ribosomal protein uL2 family. In terms of assembly, part of the 50S ribosomal subunit.

The protein localises to the plastid. It localises to the chloroplast. This is Large ribosomal subunit protein uL2c (rpl2) from Angiopteris evecta (Mule's foot fern).